Here is a 126-residue protein sequence, read N- to C-terminus: Small ribosomal subunit protein uS11 (126 aa).

The protein belongs to the universal ribosomal protein uS11 family. Part of the 30S ribosomal subunit. Interacts with proteins S7 and S18. Binds to IF-3.

Functionally, located on the platform of the 30S subunit, it bridges several disparate RNA helices of the 16S rRNA. Forms part of the Shine-Dalgarno cleft in the 70S ribosome. This is Small ribosomal subunit protein uS11 from Desulfotalea psychrophila (strain LSv54 / DSM 12343).